Here is a 175-residue protein sequence, read N- to C-terminus: Diacylglycerol kinase (175 aa).

2 helical membrane passes run 55–75 (VAPNLLVSFRYAWAGVSYAFA) and 96–116 (LLHLEAIAVAVLALTSCLVMI). E118 acts as the Proton acceptor in catalysis. Position 125 (E125) interacts with a divalent metal cation. The helical transmembrane segment at 151-171 (VLLAAIAAVIVGGCLLLPPLL) threads the bilayer.

This sequence belongs to the bacterial diacylglycerol kinase family. Requires Mg(2+) as cofactor.

The protein resides in the cell membrane. The enzyme catalyses a 1,2-diacyl-sn-glycerol + ATP = a 1,2-diacyl-sn-glycero-3-phosphate + ADP + H(+). In terms of biological role, catalyzes the ATP-dependent phosphorylation of sn-l,2-diacylglycerol (DAG) to phosphatidic acid. This chain is Diacylglycerol kinase (dgkA), found in Synechocystis sp. (strain ATCC 27184 / PCC 6803 / Kazusa).